An 828-amino-acid chain; its full sequence is E3 ubiquitin-protein ligase bre-1 (828 aa).

Residues 1 to 25 (MMKRNNEGIGGEGVANSPPDDTQQK) are disordered. The interval 1–309 (MMKRNNEGIG…SREIEALRAD (309 aa)) is interaction with ubc-1. 2 coiled-coil regions span residues 53–92 (QAAK…FLKV) and 185–251 (HKEL…TEKQ). A compositionally biased stretch (low complexity) spans 269–298 (ASGNATASSSATLNQSEKKMGSPGSPPSES). Residues 269-304 (ASGNATASSSATLNQSEKKMGSPGSPPSESTSREIE) are disordered. Coiled-coil stretches lie at residues 311–345 (DEQA…KMET), 460–616 (VNTL…RNLK), and 660–756 (DEVL…NDSA). An RING-type zinc finger spans residues 776 to 815 (CPSCKTRPKDCIMLKCYHLFCETCIKTMYDTRQRKCPKCN).

It belongs to the BRE1 family. As to quaternary structure, interacts with ubc-1. Interacts with mrg-1.

Its subcellular location is the nucleus. The enzyme catalyses S-ubiquitinyl-[E2 ubiquitin-conjugating enzyme]-L-cysteine + [acceptor protein]-L-lysine = [E2 ubiquitin-conjugating enzyme]-L-cysteine + N(6)-ubiquitinyl-[acceptor protein]-L-lysine.. It functions in the pathway protein modification; protein ubiquitination. In terms of biological role, E3 ubiquitin-protein ligase that mediates monoubiquitination of 'Lys-117' of histone H2B. H2B 'Lys-117' ubiquitination gives a specific tag for epigenetic transcriptional activation and is also prerequisite for histone H3 'Lys-4' and 'Lys-79' methylation. Involved in regulating stem cell proliferative fate. The sequence is that of E3 ubiquitin-protein ligase bre-1 from Caenorhabditis briggsae.